The sequence spans 213 residues: MEQYKRDFIEFALSRNVLKFGEFTLKSGRKSPYFFNAGLFNTGADLARLGEFYAAAIQASAVDFDVVFGPAYKGIPIGTSVSVALFNRYGIDKPVCFNRKEVKDHGEGGNLIGSPLQGKILLVDDVITAGTAIRESMELISANQAELAAVLIALNRKERGKGELSAIQEVERDYQCQVLSIIDLDDLMQFIEQDPRYSSHLPEMRAYRAEFGV.

Position 26 (K26) interacts with 5-phospho-alpha-D-ribose 1-diphosphate. Position 34–35 (34–35 (FF)) interacts with orotate. 5-phospho-alpha-D-ribose 1-diphosphate contacts are provided by residues 72 to 73 (YK), R99, K100, K103, H105, and 124 to 132 (DDVITAGTA). Residues T128 and R156 each coordinate orotate.

It belongs to the purine/pyrimidine phosphoribosyltransferase family. PyrE subfamily. Homodimer. It depends on Mg(2+) as a cofactor.

The catalysed reaction is orotidine 5'-phosphate + diphosphate = orotate + 5-phospho-alpha-D-ribose 1-diphosphate. The protein operates within pyrimidine metabolism; UMP biosynthesis via de novo pathway; UMP from orotate: step 1/2. Functionally, catalyzes the transfer of a ribosyl phosphate group from 5-phosphoribose 1-diphosphate to orotate, leading to the formation of orotidine monophosphate (OMP). The polypeptide is Orotate phosphoribosyltransferase (Haemophilus influenzae (strain ATCC 51907 / DSM 11121 / KW20 / Rd)).